We begin with the raw amino-acid sequence, 365 residues long: Cobalt-precorrin-5B C(1)-methyltransferase (365 aa).

Belongs to the CbiD family.

It catalyses the reaction Co-precorrin-5B + S-adenosyl-L-methionine = Co-precorrin-6A + S-adenosyl-L-homocysteine. Its pathway is cofactor biosynthesis; adenosylcobalamin biosynthesis; cob(II)yrinate a,c-diamide from sirohydrochlorin (anaerobic route): step 6/10. Functionally, catalyzes the methylation of C-1 in cobalt-precorrin-5B to form cobalt-precorrin-6A. This chain is Cobalt-precorrin-5B C(1)-methyltransferase, found in Clostridium perfringens (strain 13 / Type A).